Reading from the N-terminus, the 449-residue chain is GTPase Der (449 aa).

EngA-type G domains lie at 3–167 (SIVA…PDEP) and 175–350 (TNIA…EQYS). GTP-binding positions include 9 to 16 (GRPNVGKS), 56 to 60 (DTGGF), 119 to 122 (NKVD), 181 to 188 (GRPNVGKS), 228 to 232 (DTAGI), and 293 to 296 (NKWD). Residues 351–435 (RRVTTSELNR…PFRLLFRGRE (85 aa)) enclose the KH-like domain.

Belongs to the TRAFAC class TrmE-Era-EngA-EngB-Septin-like GTPase superfamily. EngA (Der) GTPase family. As to quaternary structure, associates with the 50S ribosomal subunit.

In terms of biological role, GTPase that plays an essential role in the late steps of ribosome biogenesis. This chain is GTPase Der, found in Trichlorobacter lovleyi (strain ATCC BAA-1151 / DSM 17278 / SZ) (Geobacter lovleyi).